Reading from the N-terminus, the 187-residue chain is Rusticyanin (187 aa).

A signal peptide spans 1–32 (MYTQNTMKKNWYVTVGAAAALAATVGMGTAMA). The Plastocyanin-like domain maps to 85-187 (SFEVHDKKNP…TGMFGKIVVK (103 aa)). H117, C170, H175, and M180 together coordinate Cu cation.

As to quaternary structure, monomer. Requires Cu cation as cofactor.

It is found in the periplasm. Electron carrier from cytochrome c552 to the A-type oxidase. The polypeptide is Rusticyanin (rus) (Acidithiobacillus ferrooxidans (strain ATCC 23270 / DSM 14882 / CIP 104768 / NCIMB 8455) (Ferrobacillus ferrooxidans (strain ATCC 23270))).